Consider the following 1028-residue polypeptide: Kinesin-like protein KIF28 (1028 aa).

In terms of domain architecture, Kinesin motor spans 11-358 (SVRVAVRVRP…LRYAERAKKV (348 aa)). 114–121 (GQTGSGKS) contacts ATP. The 64-residue stretch at 460-523 (CDVGRAASNA…LQHLDRIILG (64 aa)) folds into the FHA domain. The stretch at 873–902 (NQVPELYQKLLKLEQETELLRDVNRALRGE) forms a coiled coil.

The protein belongs to the TRAFAC class myosin-kinesin ATPase superfamily. Kinesin family.

Its subcellular location is the mitochondrion membrane. Its function is as follows. Microtubule-dependent motor protein required for mitochondrion morphology and transport of mitochondria in neuronal cells. The sequence is that of Kinesin-like protein KIF28 from Mus musculus (Mouse).